The chain runs to 317 residues: Protoheme IX farnesyltransferase (317 aa).

The next 9 helical transmembrane spans lie at 36-56, 57-77, 108-128, 129-149, 157-177, 184-204, 230-247, 251-273, and 284-304; these read VMVLVIFTALVGMVVSDATVN, PVIAAISLLMIAVGAGASGCL, LAFGIVLSVGSVLILGLASNW, LAAGLLAFTIVFYAVIYSMWL, IVIGGAAGALPPVVGQAAVTG, LVLFAIIFIWTPPHFWALALV, IVWYSLLLAPLALVPVWL, GWLYAVVGVLGGLGMLAGAVQVY, and AAMGLFAFSILYLFLLFSALL.

It belongs to the UbiA prenyltransferase family. Protoheme IX farnesyltransferase subfamily.

It is found in the cell inner membrane. The enzyme catalyses heme b + (2E,6E)-farnesyl diphosphate + H2O = Fe(II)-heme o + diphosphate. It participates in porphyrin-containing compound metabolism; heme O biosynthesis; heme O from protoheme: step 1/1. Converts heme B (protoheme IX) to heme O by substitution of the vinyl group on carbon 2 of heme B porphyrin ring with a hydroxyethyl farnesyl side group. This is Protoheme IX farnesyltransferase from Methylorubrum populi (strain ATCC BAA-705 / NCIMB 13946 / BJ001) (Methylobacterium populi).